The chain runs to 251 residues: Uroporphyrinogen-III C-methyltransferase (251 aa).

Residues Pro17, Gly93–Asp95, Thr123–Ser124, Met177, and Ala206 contribute to the S-adenosyl-L-homocysteine site.

It belongs to the precorrin methyltransferase family.

It localises to the plastid. It is found in the chloroplast. The catalysed reaction is uroporphyrinogen III + 2 S-adenosyl-L-methionine = precorrin-2 + 2 S-adenosyl-L-homocysteine + H(+). Its pathway is cofactor biosynthesis; adenosylcobalamin biosynthesis; precorrin-2 from uroporphyrinogen III: step 1/1. It functions in the pathway porphyrin-containing compound metabolism; siroheme biosynthesis; precorrin-2 from uroporphyrinogen III: step 1/1. Catalyzes the two successive C-2 and C-7 methylation reactions involved in the conversion of uroporphyrinogen III to precorrin-2 via the intermediate formation of precorrin-1. It is a step in the biosynthesis of both cobalamin (vitamin B12) and siroheme. In Cyanidium caldarium (Red alga), this protein is Uroporphyrinogen-III C-methyltransferase (cobA).